The chain runs to 1088 residues: RNA-directed RNA polymerase (1088 aa).

The RdRp catalytic domain occupies 501–687 (LSYGDVTRFL…AKRYIAGGKI (187 aa)).

The protein belongs to the reoviridae RNA-directed RNA polymerase family. Interacts with VP3 (Potential). Interacts with VP2; this interaction activates VP1. Interacts with NSP5; this interaction is probably necessary for the formation of functional virus factories. Interacts with NSP2; this interaction is weak. It depends on Mg(2+) as a cofactor.

The protein localises to the virion. It catalyses the reaction RNA(n) + a ribonucleoside 5'-triphosphate = RNA(n+1) + diphosphate. In terms of biological role, RNA-directed RNA polymerase that is involved in both transcription and genome replication. Together with VP3 capping enzyme, forms an enzyme complex positioned near the channels situated at each of the five-fold vertices of the core. Following infection, the outermost layer of the virus is lost, leaving a double-layered particle (DLP) made up of the core and VP6 shell. VP1 then catalyzes the transcription of fully conservative plus-strand genomic RNAs that are extruded through the DLP's channels into the cytoplasm where they function as mRNAs for translation of viral proteins. One copy of each of the viral (+)RNAs is also recruited during core assembly, together with newly synthesized polymerase complexes and VP2. The polymerase of these novo-formed particles catalyzes the synthesis of complementary minus-strands leading to dsRNA formation. To do so, the polymerase specifically recognizes and binds 4 bases 5'-UGUG-3' in the conserved 3'-sequence of plus-strand RNA templates. VP2 presumably activates the autoinhibited VP1-RNA complex to coordinate packaging and genome replication. Once dsRNA synthesis is complete, the polymerase switches to the transcriptional mode, thus providing secondary transcription. The sequence is that of RNA-directed RNA polymerase from Rotavirus A (strain RVA/SA11-Patton/G3P[X]) (RV-A).